The chain runs to 219 residues: tRNA (guanine-N(7)-)-methyltransferase (219 aa).

S-adenosyl-L-methionine-binding residues include Asp-47, Glu-72, Asn-99, and Asp-125. Residue Asp-125 is part of the active site. Positions 129 and 161 each coordinate substrate.

The protein belongs to the class I-like SAM-binding methyltransferase superfamily. TrmB family.

The enzyme catalyses guanosine(46) in tRNA + S-adenosyl-L-methionine = N(7)-methylguanosine(46) in tRNA + S-adenosyl-L-homocysteine. The protein operates within tRNA modification; N(7)-methylguanine-tRNA biosynthesis. Catalyzes the formation of N(7)-methylguanine at position 46 (m7G46) in tRNA. In Nostoc sp. (strain PCC 7120 / SAG 25.82 / UTEX 2576), this protein is tRNA (guanine-N(7)-)-methyltransferase.